The sequence spans 102 residues: Small ribosomal subunit protein bS6 (102 aa).

Belongs to the bacterial ribosomal protein bS6 family.

In terms of biological role, binds together with bS18 to 16S ribosomal RNA. This is Small ribosomal subunit protein bS6 from Deinococcus geothermalis (strain DSM 11300 / CIP 105573 / AG-3a).